A 333-amino-acid polypeptide reads, in one-letter code: Cap-specific mRNA (nucleoside-2'-O-)-methyltransferase (333 aa).

Position 22 (Tyr-22) interacts with mRNA. Positions 39, 66, 68, 72, 95, 97, 116, and 138 each coordinate S-adenosyl-L-methionine. Residues 169-249 (PVASSLKWRC…NKIVRNKVVV (81 aa)) form a binding to NPH-I region. Residues 169 to 333 (PVASSLKWRC…NSKRSVRGNK (165 aa)) form a binding to Rap94 region. The For methyltransferase activity role is filled by Lys-175. Residues 177–180 (RCPF), Asp-182, 205–207 (SAE), and Glu-233 each bind mRNA.

This sequence belongs to the class I-like SAM-binding methyltransferase superfamily. Poxvirus/kinetoplastid 2'-O-MTase family. Interacts with poly(A) polymerase catalytic subunit OPG063. Interacts with OPG109 and OPG123; these interactions might help linking transcription to capping and polyadenylation.

Its subcellular location is the virion. It catalyses the reaction a 5'-end (N(7)-methyl 5'-triphosphoguanosine)-ribonucleoside in mRNA + S-adenosyl-L-methionine = a 5'-end (N(7)-methyl 5'-triphosphoguanosine)-(2'-O-methyl-ribonucleoside) in mRNA + S-adenosyl-L-homocysteine + H(+). Its function is as follows. Displays methyltransferase, positive regulation of the poly(A) polymerase and transcription elongation activities. Involved in the modification of both mRNA ends and in intermediate and late gene positive transcription elongation. At the mRNAs 5' end, methylates the ribose 2' OH group of the first transcribed nucleotide, thereby producing a 2'-O-methylpurine cap. At the 3' end, functions as a processivity factor which stimulates the activity of the viral poly(A) polymerase OPG063 that creates mRNA's poly(A) tail. In the presence of OPG102, OPG063 does not dissociate from the RNA allowing tail elongation to around 250 adenylates. In Homo sapiens (Human), this protein is Cap-specific mRNA (nucleoside-2'-O-)-methyltransferase (OPG102).